The sequence spans 445 residues: Oxysterols receptor LXR-alpha (445 aa).

Disordered stretches follow at residues 1–34 (MSLW…QGGN) and 62–86 (TALL…KKGP). Residues 1–94 (MSLWLEAAVP…GPAPKMLGNE (94 aa)) form a transactivation AF-1; required for ligand-independent transactivation function region. Positions 93 to 168 (NELCSVCGDK…AGMREECVLS (76 aa)) form a DNA-binding region, nuclear receptor. NR C4-type zinc fingers lie at residues 96-116 (CSVC…CEGC) and 132-156 (CHSG…LRKC). Residues 178 to 200 (KRQEEEQAQATSVSPRVSSPPQV) are disordered. Low complexity predominate over residues 189 to 200 (SVSPRVSSPPQV). Ser191 carries the post-translational modification Phosphoserine. A transactivation AF-2; required for ligand-dependent transactivation function; mediates interaction with CCAR2 region spans residues 203-445 (QLSPEQLGMI…LLSEIWDVHE (243 aa)). An NR LBD domain is found at 207–445 (EQLGMIEKLV…LLSEIWDVHE (239 aa)).

The protein belongs to the nuclear hormone receptor family. NR1 subfamily. As to quaternary structure, heterodimer of NR1H3 and RXR (retinoic acid receptor). Interacts with CCAR2 (via N-terminus) in a ligand-independent manner. Interacts with SIRT1 and this interaction is inhibited by CCAR2. In terms of processing, ubiquitinated by UBR5, leading to its degradation: UBR5 specifically recognizes and binds ligand-bound NR1H3 when it is not associated with coactivators (NCOAs). In presence of NCOAs, the UBR5-degron is not accessible, preventing its ubiquitination and degradation. As to expression, in adults it is expressed in spleen, pituitary, lung, liver, and fat. Weaker expression is observed in several other tissues.

It localises to the nucleus. It is found in the cytoplasm. Nuclear receptor that exhibits a ligand-dependent transcriptional activation activity. Interaction with retinoic acid receptor (RXR) shifts RXR from its role as a silent DNA-binding partner to an active ligand-binding subunit in mediating retinoid responses through target genes defined by LXRES. LXRES are DR4-type response elements characterized by direct repeats of two similar hexanuclotide half-sites spaced by four nucleotides. Plays an important role in the regulation of cholesterol homeostasis, regulating cholesterol uptake through MYLIP-dependent ubiquitination of LDLR, VLDLR and LRP8. Interplays functionally with RORA for the regulation of genes involved in liver metabolism. Induces LPCAT3-dependent phospholipid remodeling in endoplasmic reticulum (ER) membranes of hepatocytes, driving SREBF1 processing and lipogenesis. Via LPCAT3, triggers the incorporation of arachidonate into phosphatidylcholines of ER membranes, increasing membrane dynamics and enabling triacylglycerols transfer to nascent very low-density lipoprotein (VLDL) particles. Via LPCAT3 also counteracts lipid-induced ER stress response and inflammation, likely by modulating SRC kinase membrane compartmentalization and limiting the synthesis of lipid inflammatory mediators. The polypeptide is Oxysterols receptor LXR-alpha (Nr1h3) (Rattus norvegicus (Rat)).